Consider the following 400-residue polypeptide: Queuine tRNA-ribosyltransferase catalytic subunit (400 aa).

Catalysis depends on aspartate 89, which acts as the Proton acceptor. Substrate-binding positions include 89–93 (DSGGF), aspartate 143, glutamine 185, and glycine 212. Residues 243-249 (GVGFPVD) are RNA binding. The Nucleophile role is filled by aspartate 262. The interval 267–271 (TRTAR) is RNA binding; important for wobble base 34 recognition. 4 residues coordinate Zn(2+): cysteine 301, cysteine 303, cysteine 306, and histidine 331.

The protein belongs to the queuine tRNA-ribosyltransferase family. As to quaternary structure, heterodimer of a catalytic subunit and an accessory subunit. Zn(2+) serves as cofactor.

Its subcellular location is the cytoplasm. It catalyses the reaction guanosine(34) in tRNA + queuine = queuosine(34) in tRNA + guanine. Catalytic subunit of the queuine tRNA-ribosyltransferase (TGT) that catalyzes the base-exchange of a guanine (G) residue with queuine (Q) at position 34 (anticodon wobble position) in tRNAs with GU(N) anticodons (tRNA-Asp, -Asn, -His and -Tyr), resulting in the hypermodified nucleoside queuosine (7-(((4,5-cis-dihydroxy-2-cyclopenten-1-yl)amino)methyl)-7-deazaguanosine). Catalysis occurs through a double-displacement mechanism. The nucleophile active site attacks the C1' of nucleotide 34 to detach the guanine base from the RNA, forming a covalent enzyme-RNA intermediate. The proton acceptor active site deprotonates the incoming queuine, allowing a nucleophilic attack on the C1' of the ribose to form the product. The polypeptide is Queuine tRNA-ribosyltransferase catalytic subunit (Caenorhabditis briggsae).